A 244-amino-acid chain; its full sequence is 5-oxoprolinase subunit A (244 aa).

The protein belongs to the LamB/PxpA family. Forms a complex composed of PxpA, PxpB and PxpC.

The catalysed reaction is 5-oxo-L-proline + ATP + 2 H2O = L-glutamate + ADP + phosphate + H(+). Functionally, catalyzes the cleavage of 5-oxoproline to form L-glutamate coupled to the hydrolysis of ATP to ADP and inorganic phosphate. In Shigella boydii serotype 18 (strain CDC 3083-94 / BS512), this protein is 5-oxoprolinase subunit A.